The chain runs to 313 residues: MAQVTMKEMLDAGVHFGHQTQRWNPKMKPYVYTARGGIHIIDLQKTVVRANKAAEFVKEIAANGGRLIFVGTKKQAIEPIQEAAAKCGQYYVTKRWLGGMMTNFETIKSSIDRLRKIDTMKEKGEFNYLTKKERAKLEKEYLRLTDFLAGIRDMKEMPSAMFVVDLPKEHIAVAEAKRLGIPVVAIADTNSDPESVDFAIPGNDDAIRSIKLFSNLVADAYLEGAKEWEGKLRTMTDKQSDVAKEAKADGKEEAPKRRGAGAKAGAKEAPKKSAGPAVVKATKSRKLVAAGTAEEVEIQAELEQGQSTDESAE.

Residues 233 to 256 are compositionally biased toward basic and acidic residues; sequence RTMTDKQSDVAKEAKADGKEEAPK. The tract at residues 233–293 is disordered; sequence RTMTDKQSDV…SRKLVAAGTA (61 aa).

The protein belongs to the universal ribosomal protein uS2 family.

This is Small ribosomal subunit protein uS2 from Bdellovibrio bacteriovorus (strain ATCC 15356 / DSM 50701 / NCIMB 9529 / HD100).